The following is a 624-amino-acid chain: Leucine-rich repeat, immunoglobulin-like domain and transmembrane domain-containing protein 1 (624 aa).

The signal sequence occupies residues 1 to 21 (MWVALGMLWLLALGGPHQAWG). An LRRNT domain is found at 22 to 59 (FCPSECSCSLRILSDGSKARTVVCSDPDLTLPPASIPP). Residues 22-527 (FCPSECSCSL…EVVDAEGTQR (506 aa)) lie on the Lumenal side of the membrane. LRR repeat units lie at residues 60-81 (DTCKLRLERTAIRRVPGETFRP), 84-105 (RLEQLWLPYNALSELSALMLRG), 108-129 (RLRELRLPGNRLVTFPWAALRD), 132-153 (QLQLLDLQANRLSTLPPEAAHF), and 156-177 (NLTFLDLSNNQLMRLPEELLDV). A glycan (N-linked (GlcNAc...) asparagine) is linked at Asn-156. Residues 201–254 (NPWVCDCRLYDLVHLLDGWVSSNLIFIEARLRCASPRSLAGVAFSQLELRKCQS) form the LRRCT domain. One can recognise an Ig-like C2-type domain in the interval 267–336 (PLGSTVLLRC…YICQAKNFLG (70 aa)). A disulfide bond links Cys-276 and Cys-329. N-linked (GlcNAc...) asparagine glycans are attached at residues Asn-297 and Asn-456. Residues 431–519 (MVRSLKVVGD…QCVIFSTDEV (89 aa)) form the Fibronectin type-III domain. The LRR 6 repeat unit spans residues 526 to 549 (QRLINMVVISVAAIIALPPTLLVC). A helical membrane pass occupies residues 528–548 (LINMVVISVAAIIALPPTLLV). Topologically, residues 549–624 (CCGALRRRCH…GGRRINEYFC (76 aa)) are cytoplasmic.

In terms of assembly, may form a homodimer. Interacts with LRIT2; may form a heterodimer with LRIT2. Interacts (via its N-terminal extracellular domain) with metabotropic glutamate receptor GRM6. Interacts (via its extreme C-terminus) with the scaffold protein FRMPD2 (via the third PDZ domain); the interaction leads to their colocalization in photoreceptor synapses. In terms of tissue distribution, expressed predominantly in developing photoreceptor and bipolar cells.

It is found in the endoplasmic reticulum membrane. The protein resides in the cell projection. Its subcellular location is the dendrite. In terms of biological role, photoreceptor synaptic protein essential for normal vision. Involved in synapse formation in cone photoreceptor cells. The polypeptide is Leucine-rich repeat, immunoglobulin-like domain and transmembrane domain-containing protein 1 (Lrit1) (Mus musculus (Mouse)).